The chain runs to 196 residues: MRGRDEETGEFHDKSRSQNRRDALDVLALGEKLVSLTPAQLARLPVPEDLLPHIAECKRITAHIAHKRQLAFLAKHMRREEDATLDAIRDALDANSETGRREVAMMHRAEDWRERLLAEGDKALAALLDDYPQADRQQLRTLVRNAQAEKAKNKPPRAYREIFQVLRTLMLPAALGLKASDDEVEADDTADASDED.

It belongs to the DarP family.

It localises to the cytoplasm. Functionally, member of a network of 50S ribosomal subunit biogenesis factors which assembles along the 30S-50S interface, preventing incorrect 23S rRNA structures from forming. Promotes peptidyl transferase center (PTC) maturation. The polypeptide is Dual-action ribosomal maturation protein DarP (Stenotrophomonas maltophilia (strain R551-3)).